We begin with the raw amino-acid sequence, 152 residues long: uncharacterized protein (152 aa).

This is an uncharacterized protein from Acanthamoeba polyphaga (Amoeba).